The following is a 543-amino-acid chain: Kelch repeat and BTB domain-containing protein 4 (543 aa).

In terms of domain architecture, BTB spans 70–137; it reads ADVTISVEGR…IYHGTVKLRA (68 aa). Residues 172-264 enclose the BACK domain; sequence CLQVMWLADR…SLKEIGENVH (93 aa). Kelch repeat units follow at residues 264–310, 311–353, 356–403, 405–455, and 457–505; these read HIYL…KHGG, DLYV…SVPG, AIYS…NLNG, IYLL…VHKD, and VFIV…YVFR.

As to quaternary structure, component of the BCR(KBTBD4) E3 ubiquitin ligase complex, at least composed of CUL3, KBTBD4 and RBX1.

Its function is as follows. Substrate-specific adapter of a BCR (BTB-CUL3-RBX1) E3 ubiquitin ligase complex which targets CoREST corepressor complex components RCOR1, KDM1A/LSD1 and HDAC2 for proteasomal degradation. RCOR1 is likely to be the primary target while degradation of KDM1A and HDAC2 is likely due to their association with RCOR1. Also targets RCOR3, MIER2 and MIER3 for proteasomal degradation as well as associated proteins ZNF217 and RREB1. Degradation is dependent on the presence of an ELM2 domain in the target proteins. The protein is Kelch repeat and BTB domain-containing protein 4 (KBTBD4) of Macaca fascicularis (Crab-eating macaque).